The chain runs to 103 residues: Large ribosomal subunit protein bL21 (103 aa).

The protein belongs to the bacterial ribosomal protein bL21 family. In terms of assembly, part of the 50S ribosomal subunit. Contacts protein L20.

Its function is as follows. This protein binds to 23S rRNA in the presence of protein L20. In Pseudoalteromonas atlantica (strain T6c / ATCC BAA-1087), this protein is Large ribosomal subunit protein bL21.